Reading from the N-terminus, the 434-residue chain is Serine hydroxymethyltransferase (434 aa).

(6S)-5,6,7,8-tetrahydrofolate contacts are provided by residues Leu-132 and 136–138; that span reads GHL. Lys-241 carries the N6-(pyridoxal phosphate)lysine modification.

Belongs to the SHMT family. As to quaternary structure, homodimer. Pyridoxal 5'-phosphate is required as a cofactor.

The protein resides in the cytoplasm. The catalysed reaction is (6R)-5,10-methylene-5,6,7,8-tetrahydrofolate + glycine + H2O = (6S)-5,6,7,8-tetrahydrofolate + L-serine. It participates in one-carbon metabolism; tetrahydrofolate interconversion. It functions in the pathway amino-acid biosynthesis; glycine biosynthesis; glycine from L-serine: step 1/1. Its function is as follows. Catalyzes the reversible interconversion of serine and glycine with tetrahydrofolate (THF) serving as the one-carbon carrier. This reaction serves as the major source of one-carbon groups required for the biosynthesis of purines, thymidylate, methionine, and other important biomolecules. Also exhibits THF-independent aldolase activity toward beta-hydroxyamino acids, producing glycine and aldehydes, via a retro-aldol mechanism. In Kineococcus radiotolerans (strain ATCC BAA-149 / DSM 14245 / SRS30216), this protein is Serine hydroxymethyltransferase.